Here is a 231-residue protein sequence, read N- to C-terminus: Protein fmp52-2, mitochondrial (231 aa).

Residues Met-1–Lys-46 constitute a mitochondrion transit peptide.

This sequence belongs to the FMP52 family.

It localises to the mitochondrion outer membrane. The sequence is that of Protein fmp52-2, mitochondrial (fmp522) from Neosartorya fischeri (strain ATCC 1020 / DSM 3700 / CBS 544.65 / FGSC A1164 / JCM 1740 / NRRL 181 / WB 181) (Aspergillus fischerianus).